The following is a 564-amino-acid chain: Zyxin (564 aa).

A2 carries the N-acetylalanine modification. Residues 30-141 (VAPKPKVNPF…TQLPPQPREK (112 aa)) form a disordered region. Composition is skewed to pro residues over residues 63–78 (IPPP…PPPL) and 93–109 (FPPP…PPAP). S117, S144, S170, and S171 each carry phosphoserine. The interval 162 to 344 (NDPFKARVSS…RSPGGPGPLT (183 aa)) is disordered. Pro residues-rich tracts occupy residues 174–189 (VPPP…PSTK) and 197–214 (PLPP…PQPQ). T180 carries the post-translational modification Phosphothreonine. Residues 234 to 243 (QPVSSANTQP) are compositionally biased toward polar residues. R244 carries the post-translational modification Asymmetric dimethylarginine. Over residues 255-275 (PKFAPVAPKFTPVVSKFSPGA) the composition is skewed to low complexity. K256 and K263 each carry N6-acetyllysine. Position 265 is a phosphothreonine (T265). K270 carries the post-translational modification N6-acetyllysine. Phosphoserine is present on residues S272 and S300. Over residues 294 to 310 (SSVSTGSPQPPSFTYAQ) the composition is skewed to polar residues. The span at 311–322 (QKEKPLVQEKQH) shows a compositional bias: basic and acidic residues. At S336 the chain carries Phosphoserine. 3 consecutive LIM zinc-binding domains span residues 376-435 (CGKC…TLEK), 436-495 (CNTC…YAPR), and 496-562 (CSVC…SARA).

The protein belongs to the zyxin/ajuba family. As to quaternary structure, interacts, via the Pro-rich regions, with the EVH1 domains of ENAH, EVL and VASP. Interacts with the first LIM domain of TES. Interacts with SYNPO2.

It is found in the cytoplasm. Its subcellular location is the cytoskeleton. It localises to the cell junction. The protein localises to the focal adhesion. The protein resides in the nucleus. Its function is as follows. Adhesion plaque protein. Binds alpha-actinin and the CRP protein. Important for targeting TES and ENA/VASP family members to focal adhesions and for the formation of actin-rich structures. May be a component of a signal transduction pathway that mediates adhesion-stimulated changes in gene expression. The protein is Zyxin (Zyx) of Mus musculus (Mouse).